Reading from the N-terminus, the 185-residue chain is Large ribosomal subunit protein uL5 (185 aa).

Belongs to the universal ribosomal protein uL5 family. In terms of assembly, part of the 50S ribosomal subunit; part of the 5S rRNA/L5/L18/L25 subcomplex. Contacts the 5S rRNA and the P site tRNA. Forms a bridge to the 30S subunit in the 70S ribosome.

Functionally, this is one of the proteins that bind and probably mediate the attachment of the 5S RNA into the large ribosomal subunit, where it forms part of the central protuberance. In the 70S ribosome it contacts protein S13 of the 30S subunit (bridge B1b), connecting the 2 subunits; this bridge is implicated in subunit movement. Contacts the P site tRNA; the 5S rRNA and some of its associated proteins might help stabilize positioning of ribosome-bound tRNAs. This Bacteroides thetaiotaomicron (strain ATCC 29148 / DSM 2079 / JCM 5827 / CCUG 10774 / NCTC 10582 / VPI-5482 / E50) protein is Large ribosomal subunit protein uL5.